The chain runs to 427 residues: Probable fatty acid methyltransferase Rv3720 (427 aa).

Residues 167-168, 202-210, and 227-232 contribute to the S-adenosyl-L-methionine site; these read YT, LLDVGCGWG, and TLSAEQ.

This sequence belongs to the CFA/CMAS family.

In terms of biological role, may be a S-adenosylmethionine-dependent methyltransferase involved in fatty acid metabolism. In Mycobacterium tuberculosis (strain ATCC 25618 / H37Rv), this protein is Probable fatty acid methyltransferase Rv3720.